The chain runs to 106 residues: Thioredoxin (106 aa).

Residues 1–106 (GATVKVTNAT…RLAAFLDASL (106 aa)) enclose the Thioredoxin domain. Residues cysteine 31 and cysteine 34 are joined by a disulfide bond.

The protein belongs to the thioredoxin family.

Its function is as follows. Participates in various redox reactions through the reversible oxidation of its active center dithiol to a disulfide and catalyzes dithiol-disulfide exchange reactions. The polypeptide is Thioredoxin (trxA) (Kitasatospora aureofaciens (Streptomyces aureofaciens)).